A 286-amino-acid chain; its full sequence is Thiazole synthase (286 aa).

Lysine 122 functions as the Schiff-base intermediate with DXP in the catalytic mechanism. Residues glycine 183, 209 to 210 (AG), and 231 to 232 (NT) contribute to the 1-deoxy-D-xylulose 5-phosphate site.

Belongs to the ThiG family. Homotetramer. Forms heterodimers with either ThiH or ThiS.

The protein localises to the cytoplasm. The catalysed reaction is [ThiS sulfur-carrier protein]-C-terminal-Gly-aminoethanethioate + 2-iminoacetate + 1-deoxy-D-xylulose 5-phosphate = [ThiS sulfur-carrier protein]-C-terminal Gly-Gly + 2-[(2R,5Z)-2-carboxy-4-methylthiazol-5(2H)-ylidene]ethyl phosphate + 2 H2O + H(+). Its pathway is cofactor biosynthesis; thiamine diphosphate biosynthesis. Catalyzes the rearrangement of 1-deoxy-D-xylulose 5-phosphate (DXP) to produce the thiazole phosphate moiety of thiamine. Sulfur is provided by the thiocarboxylate moiety of the carrier protein ThiS. In vitro, sulfur can be provided by H(2)S. The chain is Thiazole synthase from Synechococcus elongatus (strain ATCC 33912 / PCC 7942 / FACHB-805) (Anacystis nidulans R2).